The sequence spans 168 residues: Cell division inhibitor SulA (168 aa).

The ftsZ binding stretch occupies residues 105–111; that stretch reads ALETGNY. The segment at 161-168 is lon protease binding; that stretch reads RIHSRMVH.

This sequence belongs to the SulA family. Interacts with FtsZ. Post-translationally, is rapidly cleaved and degraded by the Lon protease once DNA damage is repaired.

In terms of biological role, component of the SOS system and an inhibitor of cell division. Accumulation of SulA causes rapid cessation of cell division and the appearance of long, non-septate filaments. In the presence of GTP, binds a polymerization-competent form of FtsZ in a 1:1 ratio, thus inhibiting FtsZ polymerization and therefore preventing it from participating in the assembly of the Z ring. This mechanism prevents the premature segregation of damaged DNA to daughter cells during cell division. The sequence is that of Cell division inhibitor SulA from Cronobacter turicensis (strain DSM 18703 / CCUG 55852 / LMG 23827 / z3032).